A 262-amino-acid chain; its full sequence is MLIIGERINGMFGDIKRAIQERDPAPVQEWARRQEEGGARALDLNVGPAVQDKVSAMEWLVEVTQEVSNLTLCLDSTNIKAIEAGLKKCKNRAMINSTNAEREKVEKLFPLAVEHGAALIGLTMNKTGIPKDSDTRLAFAMELVAAADEFGLPMEDLYIDPLILPANVAQDHAPEVLKTLQQIKMLADPAPKTVLGLSNVSQNCQNRPLINRTFLAMAMACGLDAAIADACDEALIETAATAEILLNQTVYCDSFVKMFKTR.

The 246-residue stretch at 1–246 folds into the Pterin-binding domain; sequence MLIIGERING…ETAATAEILL (246 aa). (6S)-5-methyl-5,6,7,8-tetrahydrofolate contacts are provided by Asn96 and Asp160. Ca(2+) is bound at residue Lys184. Positions 199, 202, and 207 each coordinate (6S)-5-methyl-5,6,7,8-tetrahydrofolate. 202–203 is a methylcob(III)alamin binding site; that stretch reads QN. Ca(2+) contacts are provided by Gly222 and Asp224.

It belongs to the vitamin-B12 dependent methionine synthase family. As to quaternary structure, heterohexamer composed of 2 subunits of AcsC, 2 subunits of AcsD and 2 subunits of AcsE. Ca(2+) serves as cofactor.

The enzyme catalyses methyl-Co(III)-[corrinoid Fe-S protein] + (6S)-5,6,7,8-tetrahydrofolate = Co(I)-[corrinoid Fe-S protein] + (6S)-5-methyl-5,6,7,8-tetrahydrofolate + H(+). Methyltransferase that mediates the transfer of a N5-methyl group of (6S)-methyltetrahydrofolate to the 5-methoxybenzimidazolylcobamide cofactor of a corrinoid/Fe-S protein (AcsC/AcsD) in the anaerobic acetyl-CoA pathway (Wood-Ljungdahl pathway) of carbon monoxide and carbon dioxide fixation. The protein is 5-methyltetrahydrofolate:corrinoid/iron-sulfur protein co-methyltransferase (acsE) of Moorella thermoacetica (Clostridium thermoaceticum).